The chain runs to 104 residues: Ribonuclease P protein component 4 (104 aa).

Residues C63, C66, C89, and C92 each coordinate Zn(2+).

Belongs to the eukaryotic/archaeal RNase P protein component 4 family. As to quaternary structure, consists of a catalytic RNA component and at least 4-5 protein subunits. Requires Zn(2+) as cofactor.

The protein resides in the cytoplasm. The catalysed reaction is Endonucleolytic cleavage of RNA, removing 5'-extranucleotides from tRNA precursor.. In terms of biological role, part of ribonuclease P, a protein complex that generates mature tRNA molecules by cleaving their 5'-ends. The protein is Ribonuclease P protein component 4 of Methanosphaera stadtmanae (strain ATCC 43021 / DSM 3091 / JCM 11832 / MCB-3).